A 539-amino-acid chain; its full sequence is Chaperonin GroEL (539 aa).

Residues 29 to 32 (TLGP), 86 to 90 (DGTTT), Gly413, 479 to 481 (DAL), and Asp495 contribute to the ATP site.

The protein belongs to the chaperonin (HSP60) family. As to quaternary structure, forms a cylinder of 14 subunits composed of two heptameric rings stacked back-to-back. Interacts with the co-chaperonin GroES.

The protein resides in the cytoplasm. The enzyme catalyses ATP + H2O + a folded polypeptide = ADP + phosphate + an unfolded polypeptide.. In terms of biological role, together with its co-chaperonin GroES, plays an essential role in assisting protein folding. The GroEL-GroES system forms a nano-cage that allows encapsulation of the non-native substrate proteins and provides a physical environment optimized to promote and accelerate protein folding. This chain is Chaperonin GroEL, found in Thermosipho africanus (strain TCF52B).